The sequence spans 287 residues: MKVIKTLSIINFFIFVTFNIKNESKYSNTFINNAYNMSIRRSMTESNPPTGASGSAGGSAGGSAGGSAGGSAGGSAGGSAGGSAGGSAGGSAGGSAGGSAGGSAGSGDGNGANPGADAERSPSTPATTTTTTTTNDAEASTSTSSENPNHNNAETNQANKETQNNSNVQQDSQTKSNVPPTQDADTKSPTAQPEQAENSAPTAEQTESPELQSAPENKGTGQHGHMHGSRNNHPQNTSDSQKECTDGNKENCGAATSLLNNSSNIASINKFVVLISATLVLSFAIFI.

A signal peptide spans 1 to 20; sequence MKVIKTLSIINFFIFVTFNI. Residues Asn-22 and Asn-36 are each glycosylated (N-linked (GlcNAc...) asparagine). Positions 42–248 are disordered; that stretch reads SMTESNPPTG…DSQKECTDGN (207 aa). The segment at 44 to 213 is polymorphic region; it reads TESNPPTGAS…EQTESPELQS (170 aa). Over residues 54 to 112 the composition is skewed to gly residues; the sequence is GSAGGSAGGSAGGSAGGSAGGSAGGSAGGSAGGSAGGSAGGSAGGSAGGSAGSGDGNGA. A run of 12 repeats spans residues 55 to 58, 59 to 62, 63 to 66, 67 to 70, 71 to 74, 75 to 78, 79 to 82, 83 to 86, 87 to 90, 91 to 94, 95 to 98, and 99 to 102. Positions 55–102 are 12 X 4 AA tandem repeats of S-A-G-G; the sequence is SAGGSAGGSAGGSAGGSAGGSAGGSAGGSAGGSAGGSAGGSAGGSAGG. The span at 121–149 shows a compositional bias: low complexity; sequence SPSTPATTTTTTTTNDAEASTSTSSENPN. Composition is skewed to polar residues over residues 150–180 and 187–215; these read HNNA…NVPP and KSPT…QSAP. N-linked (GlcNAc...) asparagine glycosylation is present at Asn-164. N-linked (GlcNAc...) asparagine glycosylation is present at Asn-236. A disulfide bridge links Cys-244 with Cys-252. Asn-260 and Asn-261 each carry an N-linked (GlcNAc...) asparagine glycan. Asn-261 is lipidated: GPI-anchor amidated asparagine. Residues 262–287 constitute a propeptide, removed in mature form; the sequence is SSNIASINKFVVLISATLVLSFAIFI.

It is found in the cell membrane. In terms of biological role, may play a role in the merozoite attachment to the erythrocyte. The polypeptide is Merozoite surface protein 2 (Plasmodium falciparum (isolate FCR-3 / Gambia)).